The sequence spans 168 residues: MRVQMFSGKETGEFIGGKTSLQTEAYENGLKDEELYYNIKDDLGLISRGNVYLDKTAQTIFSELSIAIDKGNLEPLKNFLKNNKLQHKKADINAKNGYGDTPLCYAAEKNNFEVAKILIKYGADLTIHNAKGETPIELFSQYGNREAVNYLQHCLDILGNNSLYEDTI.

3 ANK repeats span residues 59–88, 98–127, and 131–160; these read TIFS…LQHK, YGDT…DLTI, and KGET…ILGN.

The chain is Putative ankyrin repeat protein RBE_1411 from Rickettsia bellii (strain RML369-C).